A 158-amino-acid chain; its full sequence is Sporulation-delaying protein SdpA (158 aa).

The protein localises to the cytoplasm. Functionally, required for the maturation of SdpC to SDP. Not required for SdpC signal peptide cleavage, secretion from the cell or disulfide bond formation. The sequence is that of Sporulation-delaying protein SdpA from Bacillus subtilis (strain 168).